Reading from the N-terminus, the 249-residue chain is 1-(5-phosphoribosyl)-5-[(5-phosphoribosylamino)methylideneamino] imidazole-4-carboxamide isomerase (249 aa).

Asp10 serves as the catalytic Proton acceptor. Asp131 (proton donor) is an active-site residue.

Belongs to the HisA/HisF family.

It localises to the cytoplasm. It carries out the reaction 1-(5-phospho-beta-D-ribosyl)-5-[(5-phospho-beta-D-ribosylamino)methylideneamino]imidazole-4-carboxamide = 5-[(5-phospho-1-deoxy-D-ribulos-1-ylimino)methylamino]-1-(5-phospho-beta-D-ribosyl)imidazole-4-carboxamide. It functions in the pathway amino-acid biosynthesis; L-histidine biosynthesis; L-histidine from 5-phospho-alpha-D-ribose 1-diphosphate: step 4/9. This is 1-(5-phosphoribosyl)-5-[(5-phosphoribosylamino)methylideneamino] imidazole-4-carboxamide isomerase from Brevibacillus brevis (strain 47 / JCM 6285 / NBRC 100599).